Here is a 124-residue protein sequence, read N- to C-terminus: Small ribosomal subunit protein uS12 (124 aa).

The residue at position 89 (aspartate 89) is a 3-methylthioaspartic acid. The interval 102–124 (LDTSGVNNRKHGRSKYGTKRPKS) is disordered. Basic residues predominate over residues 109 to 124 (NRKHGRSKYGTKRPKS).

This sequence belongs to the universal ribosomal protein uS12 family. As to quaternary structure, part of the 30S ribosomal subunit. Contacts proteins S8 and S17. May interact with IF1 in the 30S initiation complex.

With S4 and S5 plays an important role in translational accuracy. In terms of biological role, interacts with and stabilizes bases of the 16S rRNA that are involved in tRNA selection in the A site and with the mRNA backbone. Located at the interface of the 30S and 50S subunits, it traverses the body of the 30S subunit contacting proteins on the other side and probably holding the rRNA structure together. The combined cluster of proteins S8, S12 and S17 appears to hold together the shoulder and platform of the 30S subunit. The sequence is that of Small ribosomal subunit protein uS12 from Francisella tularensis subsp. novicida (strain U112).